A 180-amino-acid chain; its full sequence is Putative manganese efflux pump MntP (180 aa).

The next 6 membrane-spanning stretches (helical) occupy residues phenylalanine 4 to glycine 24, leucine 40 to leucine 60, phenylalanine 64 to alanine 84, leucine 103 to isoleucine 123, phenylalanine 129 to valine 149, and phenylalanine 156 to isoleucine 176.

This sequence belongs to the MntP (TC 9.B.29) family.

The protein localises to the cell membrane. In terms of biological role, probably functions as a manganese efflux pump. In Shouchella clausii (strain KSM-K16) (Alkalihalobacillus clausii), this protein is Putative manganese efflux pump MntP.